The chain runs to 179 residues: Large ribosomal subunit protein uL6 (179 aa).

Belongs to the universal ribosomal protein uL6 family. As to quaternary structure, part of the 50S ribosomal subunit.

Functionally, this protein binds to the 23S rRNA, and is important in its secondary structure. It is located near the subunit interface in the base of the L7/L12 stalk, and near the tRNA binding site of the peptidyltransferase center. This is Large ribosomal subunit protein uL6 from Mycolicibacterium gilvum (strain PYR-GCK) (Mycobacterium gilvum (strain PYR-GCK)).